A 518-amino-acid chain; its full sequence is Allene oxide synthase, chloroplastic (518 aa).

A chloroplast-targeting transit peptide spans 1 to 33; it reads MASISTPFPISLHPKTVRSKPLKFRVLTRPIKA. 3 residues coordinate heme b: lysine 133, histidine 164, and lysine 168. 2 residues coordinate (13S)-hydroperoxy-(9Z,11E)-octadecadienoate: asparagine 321 and threonine 389. (13S)-hydroperoxy-(9Z,11E,15Z)-octadecatrienoate contacts are provided by asparagine 321 and threonine 389. Residues lysine 469 and cysteine 471 each coordinate heme b.

It belongs to the cytochrome P450 family. It depends on heme b as a cofactor.

The protein localises to the plastid. Its subcellular location is the chloroplast. It localises to the plastoglobule. It catalyses the reaction (13S)-hydroperoxy-(9Z,11E,15Z)-octadecatrienoate = (9Z,13S,15Z)-12,13-epoxyoctadeca-9,11,15-trienoate + H2O. It carries out the reaction (13S)-hydroperoxy-(9Z,11E)-octadecadienoate = (9Z,13S)-12,13-epoxyoctadeca-9,11-dienoate + H2O. Its pathway is lipid metabolism; oxylipin biosynthesis. Its function is as follows. Cytochrome P450 enzyme involved in the biosynthesis of oxylipin jasmonates, important phytohormones acting as growth regulators and signaling molecules for plant defense. Functions as an allene oxide synthase that converts hydroperoxy fatty acids to unstable allene epoxides. Catalyzes the dehydration of 13-HPOTE ((13S)-hydroperoxy-(9Z,11E,15Z)-octadecatrienoate), as well as 13-HPODE ((13S)-hydroperoxy-(9Z,11E)-octadecadienoate). In Arabidopsis thaliana (Mouse-ear cress), this protein is Allene oxide synthase, chloroplastic (CYP74A).